We begin with the raw amino-acid sequence, 349 residues long: Hydroxymethylglutaryl-CoA synthase (349 aa).

Residues aspartate 30 and alanine 31 each coordinate (3S)-3-hydroxy-3-methylglutaryl-CoA. The active-site Proton donor/acceptor is glutamate 82. The (3S)-3-hydroxy-3-methylglutaryl-CoA site is built by cysteine 114 and threonine 155. Cysteine 114 acts as the Acyl-thioester intermediate in catalysis. Arginine 203 provides a ligand contact to CoA. Residues threonine 205 and histidine 238 each coordinate (3S)-3-hydroxy-3-methylglutaryl-CoA. Histidine 238 acts as the Proton donor/acceptor in catalysis. Position 243 (lysine 243) interacts with CoA. (3S)-3-hydroxy-3-methylglutaryl-CoA contacts are provided by asparagine 270 and serine 300.

Belongs to the thiolase-like superfamily. Archaeal HMG-CoA synthase family. As to quaternary structure, interacts with acetoacetyl-CoA thiolase that catalyzes the precedent step in the pathway and with a DUF35 protein. The acetoacetyl-CoA thiolase/HMG-CoA synthase complex channels the intermediate via a fused CoA-binding site, which allows for efficient coupling of the endergonic thiolase reaction with the exergonic HMGCS reaction.

The enzyme catalyses acetoacetyl-CoA + acetyl-CoA + H2O = (3S)-3-hydroxy-3-methylglutaryl-CoA + CoA + H(+). It functions in the pathway metabolic intermediate biosynthesis; (R)-mevalonate biosynthesis; (R)-mevalonate from acetyl-CoA: step 2/3. Functionally, catalyzes the condensation of acetyl-CoA with acetoacetyl-CoA to form 3-hydroxy-3-methylglutaryl-CoA (HMG-CoA). Functions in the mevalonate (MVA) pathway leading to isopentenyl diphosphate (IPP), a key precursor for the biosynthesis of isoprenoid compounds that are building blocks of archaeal membrane lipids. The polypeptide is Hydroxymethylglutaryl-CoA synthase (Methanococcus maripaludis (strain DSM 14266 / JCM 13030 / NBRC 101832 / S2 / LL)).